The following is a 302-amino-acid chain: MAAAAAAAAAAGAAGGRGSGPGRRRHLVPGAGGEAGEGDPGGAGDYGNGLESEELEPGELLPEPEPEEEPPRPRAPPGAPGPGPGSGAPGSQEEEEEPGLVEADPGDGAIEDPELEAIKARVREMEEEAEKLKELQNEVEKQMNMSPPPGNAGPVIMSLEEKMEADARSIYVGNVDYGATAEELEAHFHGCGSVNRVTILCDKFSGHPKGFAYIEFSDKESVRTSLALDESLFRGRQIKVIPKRTNRPGISTTDRGFPRSRYRARTTNYNSSRSRFYSGFNSRPRGRIYRGRARATSWYSPY.

Low complexity predominate over residues 1–12 (MAAAAAAAAAAG). Positions 1–111 (MAAAAAAAAA…EADPGDGAIE (111 aa)) are disordered. Alanine 2 carries the N-acetylalanine modification. An interaction with SKIP region spans residues 2–141 (AAAAAAAAAA…LKELQNEVEK (140 aa)). Arginine 17 is subject to Omega-N-methylarginine. Serine 19 carries the post-translational modification Phosphoserine. Residues 30–47 (GAGGEAGEGDPGGAGDYG) show a composition bias toward gly residues. Residues 51–68 (ESEELEPGELLPEPEPEE) show a composition bias toward acidic residues. Serine 52 is subject to Phosphoserine. The span at 73-83 (PRAPPGAPGPG) shows a compositional bias: pro residues. Residue serine 91 is modified to Phosphoserine. A coiled-coil region spans residues 111 to 147 (EDPELEAIKARVREMEEEAEKLKELQNEVEKQMNMSP). The tract at residues 115–143 (LEAIKARVREMEEEAEKLKELQNEVEKQM) is stimulates PAPOLA. A phosphoserine mark is found at serine 146 and serine 231. The RRM domain occupies 168-245 (RSIYVGNVDY…RQIKVIPKRT (78 aa)). Asymmetric dimethylarginine; alternate is present on residues arginine 234, arginine 255, and arginine 259. Residues arginine 234, arginine 255, and arginine 259 each carry the omega-N-methylarginine; alternate modification. The tract at residues 255-302 (RGFPRSRYRARTTNYNSSRSRFYSGFNSRPRGRIYRGRARATSWYSPY) is strong poly(A) affinity and self-association. 11 positions are modified to asymmetric dimethylarginine: arginine 261, arginine 263, arginine 265, arginine 273, arginine 275, arginine 283, arginine 285, arginine 287, arginine 290, arginine 292, and arginine 294. Positions 282-302 (SRPRGRIYRGRARATSWYSPY) are interaction with PAPOLA.

As to quaternary structure, monomer and homooligomer. Identified in a IGF2BP1-dependent mRNP granule complex containing untranslated mRNAs. Binds RNA as a monomer and oligomerizes when bound to poly(A). Interacts with PAPOLA, but only in presence of oligo(A) RNA. Interacts with NUDT21/CPSF5 and transportin. Associates in a ternary complex with CPSF4 and NS/NS1 and interaction with NS/NS1, blocks nuclear export of host cell mRNAs. Associates in a single complex with SKIP and MYOD1 and interacts with SKIP in differentiated myocytes. May interact with SETX. Interacts (via RRM domain and C-terminal arginine-rich region) with ZFP36 (via hypophosphorylated form); this interaction occurs in the nucleus in a RNA-independent manner, decreases in presence of single-stranded poly(A) RNA-oligomer and in a p38-dependent-manner and may down-regulated RNA poly(A) polymerase activity. Component of the poly(A) tail exosome targeting (PAXT) complex composed of PABPN1, ZFC3H1 and MTREX. Interacts with ZFC3H1 in a RNase-insensitive manner. Interacts with FRG1. Interacts with ZC3H11A. In terms of processing, arginine dimethylation is asymmetric and involves PRMT1 and PRMT3. It does not influence the RNA binding properties. In terms of tissue distribution, ubiquitous.

The protein localises to the cytoplasm. The protein resides in the nucleus. It is found in the nucleus speckle. In terms of biological role, involved in the 3'-end formation of mRNA precursors (pre-mRNA) by the addition of a poly(A) tail of 200-250 nt to the upstream cleavage product. Stimulates poly(A) polymerase (PAPOLA) conferring processivity on the poly(A) tail elongation reaction and also controls the poly(A) tail length. Increases the affinity of poly(A) polymerase for RNA. Is also present at various stages of mRNA metabolism including nucleocytoplasmic trafficking and nonsense-mediated decay (NMD) of mRNA. Cooperates with SKIP to synergistically activate E-box-mediated transcription through MYOD1 and may regulate the expression of muscle-specific genes. Binds to poly(A) and to poly(G) with high affinity. May protect the poly(A) tail from degradation. Subunit of the trimeric poly(A) tail exosome targeting (PAXT) complex, a complex that directs a subset of long and polyadenylated poly(A) RNAs for exosomal degradation. The RNA exosome is fundamental for the degradation of RNA in eukaryotic nuclei. Substrate targeting is facilitated by its cofactor MTREX, which links to RNA-binding protein adapters. The protein is Polyadenylate-binding protein 2 (Pabpn1) of Mus musculus (Mouse).